The primary structure comprises 280 residues: MPFFFSGYAMNALPVRLEAVIFDWAGTLVDFGSFAPTRVFVEAFAQFGVALTLEQARGPMGMGKWDHIRALCDDPGIASQYQERFGALPDDAAVTAIYERFLPMQLEKVAEYSDVIPGALQTLREIRERGLKVGSCSGYPASVMRRVLERALAGGLEIATVVASDQVPRARPAPAMALKNAVELGVADVAACVKVDDTGVGIEEGRRAGMWSVGLLLSGNAAGLTRDAYQALDEVGREAARARARQAFASAEPHYFIDTIADLPSVLSDIEARLASAERP.

The active-site Nucleophile is aspartate 23. Residues aspartate 23 and alanine 25 each coordinate Mg(2+). Lysine 64 serves as the catalytic Schiff-base intermediate with substrate. Position 197 (aspartate 197) interacts with Mg(2+).

The protein belongs to the HAD-like hydrolase superfamily. PhnX family. In terms of assembly, homodimer. Mg(2+) is required as a cofactor.

It carries out the reaction phosphonoacetaldehyde + H2O = acetaldehyde + phosphate + H(+). Its function is as follows. Involved in phosphonate degradation. The chain is Phosphonoacetaldehyde hydrolase from Bordetella avium (strain 197N).